The sequence spans 149 residues: D-aminoacyl-tRNA deacylase (149 aa).

The Gly-cisPro motif, important for rejection of L-amino acids motif lies at Gly137 to Pro138.

It belongs to the DTD family. Homodimer.

It is found in the cytoplasm. The enzyme catalyses glycyl-tRNA(Ala) + H2O = tRNA(Ala) + glycine + H(+). The catalysed reaction is a D-aminoacyl-tRNA + H2O = a tRNA + a D-alpha-amino acid + H(+). An aminoacyl-tRNA editing enzyme that deacylates mischarged D-aminoacyl-tRNAs. Also deacylates mischarged glycyl-tRNA(Ala), protecting cells against glycine mischarging by AlaRS. Acts via tRNA-based rather than protein-based catalysis; rejects L-amino acids rather than detecting D-amino acids in the active site. By recycling D-aminoacyl-tRNA to D-amino acids and free tRNA molecules, this enzyme counteracts the toxicity associated with the formation of D-aminoacyl-tRNA entities in vivo and helps enforce protein L-homochirality. The sequence is that of D-aminoacyl-tRNA deacylase from Thioalkalivibrio sulfidiphilus (strain HL-EbGR7).